The following is a 620-amino-acid chain: Chaperone protein HscA homolog (620 aa).

This sequence belongs to the heat shock protein 70 family.

Its function is as follows. Chaperone involved in the maturation of iron-sulfur cluster-containing proteins. Has a low intrinsic ATPase activity which is markedly stimulated by HscB. This is Chaperone protein HscA homolog from Neisseria meningitidis serogroup B (strain ATCC BAA-335 / MC58).